Reading from the N-terminus, the 1240-residue chain is Cohesin subunit SA-3 (1240 aa).

Residues 1-25 are compositionally biased toward low complexity; that stretch reads MPTLWSPSTQHHGSSSGSESSPLQK. Residues 1 to 108 are disordered; sequence MPTLWSPSTQ…VSSGNGKNES (108 aa). A compositionally biased stretch (polar residues) spans 97–108; the sequence is RIVSSGNGKNES. Residues 324–409 form the SCD domain; that stretch reads FVHRYRDILP…NRFKDRMVSM (86 aa). Disordered regions lie at residues 1077 to 1154 and 1213 to 1240; these read AEAS…PELI and DKMLHSPSSPSEHGLDLLDTTELNMEDF. The span at 1115–1125 shows a compositional bias: polar residues; it reads GPTTPTLTSTA. Residues 1126–1141 show a composition bias toward basic residues; that stretch reads VKRKQSLRTVGKKQKG. At Ser-1218 the chain carries Phosphoserine.

This sequence belongs to the SCC3 family. In terms of assembly, component of the meiosis-specific cohesin complex, which also contains the SMC1 (SMC1A or SMC1B) and SMC3 heterodimer. Such complex likely contains RAD21, or the meiosis-specific related protein REC8. Interacts with CCDC79/TERB1; recruiting cohesin to telomeres to develop structural rigidity. In terms of processing, phosphorylated. Testis specific.

Its subcellular location is the nucleus. The protein resides in the chromosome. It localises to the centromere. Its function is as follows. Meiosis specific component of cohesin complex. The cohesin complex is required for the cohesion of sister chromatids after DNA replication. The cohesin complex apparently forms a large proteinaceous ring within which sister chromatids can be trapped. At anaphase, the complex is cleaved and dissociates from chromatin, allowing sister chromatids to segregate. The meiosis-specific cohesin complex probably replaces mitosis specific cohesin complex when it dissociates from chromatin during prophase I. This chain is Cohesin subunit SA-3 (Stag3), found in Mus musculus (Mouse).